The sequence spans 528 residues: Poly(A) RNA polymerase GLD2 (528 aa).

Disordered regions lie at residues 1–41 (MYPN…QPQQ) and 99–121 (RDQSPLISPASPSSSFQNRKRRS). Composition is skewed to low complexity over residues 16–32 (PCEQQQPPLEQSQEQPL) and 102–113 (SPLISPASPSSS). Positions 259 and 261 each coordinate Mg(2+). Positions 428–481 (LGDLLLGFLKYFAIEFDWSKDIISVREAKALPRSDDYEWRNKFICVEEPYDRTN) constitute a PAP-associated domain.

It belongs to the DNA polymerase type-B-like family. GLD2 subfamily. As to quaternary structure, component of a complex at least composed of cpeb1, cpsf1, tent2/gld2, pabpc1/ePAB, parn and sympk. Following oocyte maturation, parn is expelled from the complex. Interacts with rbm9 and sympk. The cofactor is Mg(2+). Requires Mn(2+) as cofactor.

It localises to the cytoplasm. It catalyses the reaction RNA(n) + ATP = RNA(n)-3'-adenine ribonucleotide + diphosphate. Its function is as follows. Cytoplasmic poly(A) RNA polymerase that adds successive AMP monomers to the 3'-end of specific RNAs, forming a poly(A) tail. In contrast to the canonical nuclear poly(A) RNA polymerase, it only adds poly(A) to selected cytoplasmic mRNAs during oocyte maturation. Plays a central role during oocyte maturation by mediating polyadenylation of dormant mRNAs, which contain 5'AAUAAA-3' sequence in their 3'-UTR. In immature oocytes, polyadenylation of poly(A) tails is counteracted by the ribonuclease parn. During maturation parn is excluded from the ribonucleoprotein complex, allowing poly(A) elongation and activation of mRNAs. May not play a role in replication-dependent histone mRNA degradation. This chain is Poly(A) RNA polymerase GLD2 (tent2), found in Xenopus tropicalis (Western clawed frog).